The primary structure comprises 131 residues: Cytochrome c-552 (131 aa).

Residues Cys11, Cys14, His15, and Met69 each contribute to the heme c site.

In terms of processing, binds 1 heme c group covalently per subunit.

This monoheme basic protein appears to function as an electron donor to cytochrome oxidase in T.thermophilus. This Thermus thermophilus protein is Cytochrome c-552 (cycA).